A 133-amino-acid polypeptide reads, in one-letter code: MASNDTIADMLTRIRNACAVRHPTTKVPTTKMTRSIAQVLKQEGFIEDFSEAGEGVGKHLVISLKYKGKTRQPIITTLKRVSKPGLRVYSPCKDLPRVLGGIGIAIVSTSQGIMTDREARRQGVGGEVLCYIW.

The protein belongs to the universal ribosomal protein uS8 family. Part of the 30S ribosomal subunit. Contacts proteins S5 and S12.

In terms of biological role, one of the primary rRNA binding proteins, it binds directly to 16S rRNA central domain where it helps coordinate assembly of the platform of the 30S subunit. The protein is Small ribosomal subunit protein uS8 of Gloeothece citriformis (strain PCC 7424) (Cyanothece sp. (strain PCC 7424)).